A 180-amino-acid chain; its full sequence is N-terminal acetyltransferase B complex catalytic subunit naa20 (180 aa).

The N-acetyltransferase domain maps to 2 to 156; it reads TDTRKFKATD…DSFDMRKPLS (155 aa).

Belongs to the acetyltransferase family. In terms of assembly, component of the N-terminal acetyltransferase B (NatB) complex.

It localises to the cytoplasm. The protein localises to the nucleus. The catalysed reaction is N-terminal L-methionyl-L-asparaginyl-[protein] + acetyl-CoA = N-terminal N(alpha)-acetyl-L-methionyl-L-asparaginyl-[protein] + CoA + H(+). It carries out the reaction N-terminal L-methionyl-L-glutaminyl-[protein] + acetyl-CoA = N-terminal N(alpha)-acetyl-L-methionyl-L-glutaminyl-[protein] + CoA + H(+). The enzyme catalyses N-terminal L-methionyl-L-aspartyl-[protein] + acetyl-CoA = N-terminal N(alpha)-acetyl-L-methionyl-L-aspartyl-[protein] + CoA + H(+). It catalyses the reaction N-terminal L-methionyl-L-glutamyl-[protein] + acetyl-CoA = N-terminal N(alpha)-acetyl-L-methionyl-L-glutamyl-[protein] + CoA + H(+). In terms of biological role, catalytic subunit of the NatB N-terminal acetyltransferase, which catalyzes acetylation of the amino-terminal methionine residues of all proteins beginning with Met-Asp or Met-Glu and of some proteins beginning with Met-Asn, Met-Gln or Met-Met. In Schizosaccharomyces pombe (strain 972 / ATCC 24843) (Fission yeast), this protein is N-terminal acetyltransferase B complex catalytic subunit naa20 (naa20).